The sequence spans 230 residues: Large ribosomal subunit protein uL1 (230 aa).

Belongs to the universal ribosomal protein uL1 family. Part of the 50S ribosomal subunit.

Functionally, binds directly to 23S rRNA. The L1 stalk is quite mobile in the ribosome, and is involved in E site tRNA release. Protein L1 is also a translational repressor protein, it controls the translation of the L11 operon by binding to its mRNA. The polypeptide is Large ribosomal subunit protein uL1 (Nitrosospira multiformis (strain ATCC 25196 / NCIMB 11849 / C 71)).